Here is a 519-residue protein sequence, read N- to C-terminus: Bifunctional purine biosynthesis protein PurH (519 aa).

One can recognise an MGS-like domain in the interval 1–145 (MQPIQRALIS…KNHASVTVVV (145 aa)).

It belongs to the PurH family.

The catalysed reaction is (6R)-10-formyltetrahydrofolate + 5-amino-1-(5-phospho-beta-D-ribosyl)imidazole-4-carboxamide = 5-formamido-1-(5-phospho-D-ribosyl)imidazole-4-carboxamide + (6S)-5,6,7,8-tetrahydrofolate. The enzyme catalyses IMP + H2O = 5-formamido-1-(5-phospho-D-ribosyl)imidazole-4-carboxamide. The protein operates within purine metabolism; IMP biosynthesis via de novo pathway; 5-formamido-1-(5-phospho-D-ribosyl)imidazole-4-carboxamide from 5-amino-1-(5-phospho-D-ribosyl)imidazole-4-carboxamide (10-formyl THF route): step 1/1. Its pathway is purine metabolism; IMP biosynthesis via de novo pathway; IMP from 5-formamido-1-(5-phospho-D-ribosyl)imidazole-4-carboxamide: step 1/1. This is Bifunctional purine biosynthesis protein PurH from Allochromatium vinosum (strain ATCC 17899 / DSM 180 / NBRC 103801 / NCIMB 10441 / D) (Chromatium vinosum).